The chain runs to 1108 residues: Ubiquitin carboxyl-terminal hydrolase 5 (1108 aa).

One can recognise an MATH domain in the interval 55–187 (FQRFTWHIKS…DGALLLTAYV (133 aa)). Active-site nucleophile residues include cysteine 120 and cysteine 222. The region spanning 213–528 (VGLKNQGATC…SAYMLLYLRK (316 aa)) is the USP domain. Residue histidine 464 is the Proton acceptor of the active site.

The protein belongs to the peptidase C19 family.

The protein resides in the nucleus. It carries out the reaction Thiol-dependent hydrolysis of ester, thioester, amide, peptide and isopeptide bonds formed by the C-terminal Gly of ubiquitin (a 76-residue protein attached to proteins as an intracellular targeting signal).. In terms of biological role, hydrolase that deubiquitinates target proteins. Cleaves the UBL propeptide in sde2. The chain is Ubiquitin carboxyl-terminal hydrolase 5 (ubp5) from Schizosaccharomyces pombe (strain 972 / ATCC 24843) (Fission yeast).